Consider the following 229-residue polypeptide: Potassium/proton antiporter CemA (229 aa).

4 helical membrane passes run 11–31 (TTPF…SLFF), 118–138 (IISF…LVIL), 158–178 (LLAL…ELLI), and 190–210 (LLVC…TFNY).

The protein belongs to the CemA family.

Its subcellular location is the plastid. The protein localises to the chloroplast inner membrane. It catalyses the reaction K(+)(in) + H(+)(out) = K(+)(out) + H(+)(in). In terms of biological role, contributes to K(+)/H(+) antiport activity by supporting proton efflux to control proton extrusion and homeostasis in chloroplasts in a light-dependent manner to modulate photosynthesis. Prevents excessive induction of non-photochemical quenching (NPQ) under continuous-light conditions. Indirectly promotes efficient inorganic carbon uptake into chloroplasts. The polypeptide is Potassium/proton antiporter CemA (Pelargonium hortorum (Common geranium)).